The primary structure comprises 223 residues: ATP-dependent dethiobiotin synthetase BioD (223 aa).

11–16 (DIGKTY) contacts ATP. Thr15 provides a ligand contact to Mg(2+). Lys36 is an active-site residue. Thr40 is a substrate binding site. ATP is bound by residues Asp50, 110–113 (EGAG), and 174–175 (NN). 2 residues coordinate Mg(2+): Asp50 and Glu110.

This sequence belongs to the dethiobiotin synthetase family. As to quaternary structure, homodimer. It depends on Mg(2+) as a cofactor.

It localises to the cytoplasm. The catalysed reaction is (7R,8S)-7,8-diammoniononanoate + CO2 + ATP = (4R,5S)-dethiobiotin + ADP + phosphate + 3 H(+). It functions in the pathway cofactor biosynthesis; biotin biosynthesis; biotin from 7,8-diaminononanoate: step 1/2. In terms of biological role, catalyzes a mechanistically unusual reaction, the ATP-dependent insertion of CO2 between the N7 and N8 nitrogen atoms of 7,8-diaminopelargonic acid (DAPA, also called 7,8-diammoniononanoate) to form a ureido ring. In Staphylococcus epidermidis (strain ATCC 35984 / DSM 28319 / BCRC 17069 / CCUG 31568 / BM 3577 / RP62A), this protein is ATP-dependent dethiobiotin synthetase BioD.